Consider the following 452-residue polypeptide: Scaffold protein ILK (452 aa).

M1 is subject to N-acetylmethionine. ANK repeat units lie at residues 2–30 (DDIFTQCREGNAVAVRLWLDNTENDLNQG), 31–63 (DDHGFSPLHWACREGRSAVVEMLIMRGARINVM), 64–96 (NRGDDTPLHLAASHGHRDIVQKLLQYKADINAV), 97–129 (NEHGNVPLHYACFWGQDQVAEDLVANGALVSIC), and 130–174 (NKYG…GTTR). An interaction with LIMS1 region spans residues 33–139 (HGFSPLHWAC…NKYGEMPVDK (107 aa)). T173 carries the post-translational modification Phosphothreonine; by PAK1. Residues 180 to 212 (GTLNKHSGIDFKQLNFLTKLNENHSGELWKGRW) are PH-like; mediates interaction with TGFB1I1. Residue S186 is modified to Phosphoserine. Residues 193–446 (LNFLTKLNEN…PKFDMIVPIL (254 aa)) enclose the Protein kinase domain. N200, N202, H203, S204, and K220 together coordinate ATP. At S246 the chain carries Phosphoserine; by PAK1. ATP contacts are provided by H270, M272, and N279. Residue D339 participates in Mg(2+) binding. K341 contributes to the ATP binding site. Residues 363–371 (KKPEDTNRR) carry the Nuclear localization signal motif. An N6-acetyllysine modification is found at K426.

It belongs to the protein kinase superfamily. TKL Ser/Thr protein kinase family. As to quaternary structure, component of the heterotrimeric IPP (ILK-PINCH-PARVIN) complex composed of ILK, LIMS1/PINCH and PARVA; the complex binds to F-actin via the C-terminal tail of LIMS1 and the N-terminal region of PARVA, promoting F-actin filament bundling. Formation of the IPP complex is dependent on protein kinase C and precedes integrin-mediated cell adhesion and spreading. ILK also interacts with LIMS2/PINCH2 and with PARVB and PARVG which may substitute for LIMS1 and PARVA in the IPP complex; PARVA and PARVB compete for the same binding site. Interaction with PARVG promotes the establishment of cell polarity required for leukocyte migration. Interacts with the cytoplasmic domain of integrin ITGB1 and may also interact with integrins ITGB2, ITGB3 and/or ITGB5. Interacts probably also with TGFB1I1. Interacts (via ANK repeats) with EPHA1 (via SAM domain); stimulated by EFNA1 but independent of the kinase activity of EPHA1. Interacts with FERMT2. Interacts with LIMD2; leading to activate the protein kinase activity. Interacts with PXN/PAXILLIN (via LD motif 4). Interacts with CCDC25 (via cytoplasmic region); initiating the ILK-PARVB cascade to induce cytoskeleton rearrangement and directional migration of cells. Interacts with IQGAP1; the interaction is required for localization of IQGAP1 to the cell cortex. Phosphorylation by PAK1 modulates ILK subcellular location by promoting its nuclear export. Highly expressed in heart followed by skeletal muscle, pancreas and kidney. Weakly expressed in placenta, lung and liver.

It localises to the cell junction. The protein localises to the focal adhesion. Its subcellular location is the cell membrane. The protein resides in the cell projection. It is found in the lamellipodium. It localises to the cytoplasm. The protein localises to the myofibril. Its subcellular location is the sarcomere. The protein resides in the nucleus. It is found in the cytoskeleton. It localises to the microtubule organizing center. The protein localises to the centrosome. Its subcellular location is the cell cortex. Its function is as follows. Scaffold protein which mediates protein-protein interactions during a range of cellular events including focal adhesion assembly, cell adhesion and cell migration. Regulates integrin-mediated signal transduction by contributing to inside-out integrin activation. Recruits PARVA and LIMS1/PITCH to form the heterotrimeric IPP (ILK-PINCH-PARVIN) complex which binds to F-actin via the C-terminal tail of LIMS1 and the N-terminal region of PARVA, promoting F-actin filament bundling, a process required to generate force for actin cytoskeleton reorganization and subsequent dynamic cell adhesion events such as cell spreading and migration. Binding to PARVA promotes effective assembly of ILK into focal adhesions while PARVA-bound ILK can simultaneously engage integrin-beta cytoplasmic tails to mediate cell adhesion. Plays a role with PARVG in promoting the cell adhesion and spreading of leukocytes. Acts as an upstream effector of both AKT1/PKB and GSK3. Mediates trafficking of caveolae to the cell surface in an ITGB1-dependent manner by promoting the recruitment of IQGAP1 to the cell cortex which cooperates with its effector DIAPH1 to locally stabilize microtubules and allow stable insertion of caveolae into the plasma membrane. Required for the maintenance of mitotic spindle integrity by promoting phosphorylation of TACC3 by AURKA. Associates with chromatin and may act as a negative regulator of transcription when located in the nucleus. The chain is Scaffold protein ILK from Homo sapiens (Human).